A 287-amino-acid polypeptide reads, in one-letter code: Small ribosomal subunit biogenesis GTPase RsgA (287 aa).

One can recognise a CP-type G domain in the interval 61 to 218 (ISQLKRPAVA…MVDTPGFSSL (158 aa)). GTP-binding positions include 110-113 (NKLD) and 161-169 (GPSGVGKST). Zn(2+) contacts are provided by Cys242, Cys247, His249, and Cys255.

Belongs to the TRAFAC class YlqF/YawG GTPase family. RsgA subfamily. In terms of assembly, monomer. Associates with 30S ribosomal subunit, binds 16S rRNA. The cofactor is Zn(2+).

It localises to the cytoplasm. Its function is as follows. One of several proteins that assist in the late maturation steps of the functional core of the 30S ribosomal subunit. Helps release RbfA from mature subunits. May play a role in the assembly of ribosomal proteins into the subunit. Circularly permuted GTPase that catalyzes slow GTP hydrolysis, GTPase activity is stimulated by the 30S ribosomal subunit. In Clostridium kluyveri (strain NBRC 12016), this protein is Small ribosomal subunit biogenesis GTPase RsgA.